Here is a 373-residue protein sequence, read N- to C-terminus: L-threonine 3-dehydrogenase, mitochondrial (373 aa).

NAD(+) is bound by residues 62 to 67 (GGLGQL), 88 to 90 (DIR), 106 to 107 (NI), Tyr195, Lys199, and Ile225. The Proton donor/acceptor role is filled by Tyr195.

It belongs to the NAD(P)-dependent epimerase/dehydratase family. In terms of assembly, homodimer.

Its subcellular location is the mitochondrion. It carries out the reaction L-threonine + NAD(+) = (2S)-2-amino-3-oxobutanoate + NADH + H(+). The protein operates within amino-acid degradation; L-threonine degradation via oxydo-reductase pathway; glycine from L-threonine: step 1/2. Its function is as follows. Catalyzes the NAD(+)-dependent oxidation of L-threonine to 2-amino-3-ketobutyrate, mediating L-threonine catabolism. In Mus musculus (Mouse), this protein is L-threonine 3-dehydrogenase, mitochondrial.